The chain runs to 28 residues: Cycloviolin-B (28 aa).

The segment at residues 1–28 is a cross-link (cyclopeptide (Gly-Asn)); sequence GTACGESCYVLPCFTVGCTCTSSQCFKN. 3 disulfide bridges follow: cysteine 4-cysteine 18, cysteine 8-cysteine 20, and cysteine 13-cysteine 25.

This is a cyclic peptide.

Probably participates in a plant defense mechanism. Has anti-HIV activity. The chain is Cycloviolin-B from Leonia cymosa (Sacha uba).